The chain runs to 1090 residues: Exocyst complex component SEC5A (1090 aa).

The segment at 18–128 is disordered; sequence LKEQAKRDLT…ARKEDDGAWD (111 aa). Residues 45-69 are compositionally biased toward low complexity; that stretch reads QQPRQQKPVAAAAAPPKKSAAAVRK. The segment covering 109–124 has biased composition (basic and acidic residues); the sequence is RGSDVREKGRARKEDD. Position 180 is a phosphoserine (S180). Disordered regions lie at residues 759 to 783, 987 to 1010, and 1046 to 1090; these read TSRQ…NTYG, VETP…DKQS, and APLE…PRRR. Basic and acidic residues predominate over residues 998–1009; the sequence is RGSEDTVSDDKQ. The segment covering 1058–1082 has biased composition (polar residues); it reads TYSSFRGSMDSPSRNYRGSQSSGSP.

It belongs to the SEC5 family. In terms of assembly, the exocyst complex is composed of SEC3, SEC5, SEC6, SEC8, SEC10, EXO70A1 and EXO84B. Interacts with SEC3A and EXO70B1. Binds to EXO70H1 and EXO70B2. Binds directly to B1L.

The protein localises to the cytoplasm. Its subcellular location is the cytosol. It is found in the secreted. It localises to the extracellular exosome. Functionally, component of the exocyst complex involved in the docking of exocytic vesicles with fusion sites on the plasma membrane during regulated or polarized secretion. Involved in polarized cell growth and organ morphogenesis. During cytokinesis, involved in cell plate initiation, cell plate maturation and formation of new primary cell wall. Probable component of an exocyst subcomplex specifically involved in autophagy-related, Golgi-independent membrane traffic to the vacuole. Regulates autophagosome formation and autophagy-related Golgi-independent import into the vacuole. The sequence is that of Exocyst complex component SEC5A from Arabidopsis thaliana (Mouse-ear cress).